Consider the following 351-residue polypeptide: HGYVDQVTIGGQVYTGYQPYQDPYESPVPQRIERAIPGNGPVEDLTLLDIQCNGSGGSGTKPAALIASAAAGDEIAFHWTTWPSSHVGPVITYMGKVPSNTDITSYSPTGSDVIWFKIDEAGYENGKWAATDIMSAQNSTWTVTIPKALAPGQYIVRHEIIALHQAETYPGAQFYPDCFQVQVTGPGTETPTSQALVSFPGGYTPTTPGITFNVYSGSITSYPIPGPPVWTSNEAFSGGSSSSAAASSTAVASSTADSSSSAAATQSSSAAASGSAAPSSSAIGTSTASSAAASGTAIVDANTCMNNYNKCIDAGQPDPDWSGCTATKDACLAGATYQRLARSGTLGRLSF.

H1 lines the Cu(2+) pocket. A disulfide bridge connects residues C52 and C178. N-linked (GlcNAc...) asparagine glycosylation occurs at N53. Cu(2+) is bound at residue H86. N138 carries N-linked (GlcNAc...) asparagine glycosylation. Residues H164 and Q173 each contribute to the O2 site. Position 175 (Y175) interacts with Cu(2+). Residue S280 is the site of GPI-anchor amidated serine attachment. Residues 281–351 (SAIGTSTASS…RSGTLGRLSF (71 aa)) constitute a propeptide, removed in mature form.

Belongs to the polysaccharide monooxygenase AA9 family. It depends on Cu(2+) as a cofactor.

It localises to the cell membrane. The catalysed reaction is [(1-&gt;4)-beta-D-glucosyl]n+m + reduced acceptor + O2 = 4-dehydro-beta-D-glucosyl-[(1-&gt;4)-beta-D-glucosyl]n-1 + [(1-&gt;4)-beta-D-glucosyl]m + acceptor + H2O.. Functionally, lytic polysaccharide monooxygenase (LPMO) that depolymerizes crystalline and amorphous polysaccharides via the oxidation of scissile alpha- or beta-(1-4)-glycosidic bonds, yielding C1 or C4 oxidation products. Catalysis by LPMOs requires the reduction of the active-site copper from Cu(II) to Cu(I) by a reducing agent and H(2)O(2) or O(2) as a cosubstrate. Its function is as follows. Has broad specificity, cleaving at any position along the beta-glucan backbone of xyloglucan, regardless of substitutions. Shows minor activity on glucomannan. The polypeptide is AA9 family lytic polysaccharide monooxygenase A (Gloeophyllum trabeum (Brown rot fungus)).